The sequence spans 1555 residues: Phospholipid-transporting ATPase DNF1 (1555 aa).

Residues 1–85 (MAPPQEEGGG…SSNNGGSAPR (85 aa)) are disordered. At 1–134 (MAPPQEEGGG…PKNLWFQFHN (134 aa)) the chain is on the cytoplasmic side. Residues 22–37 (WATRRLTVKSGARKRL) show a composition bias toward basic residues. Positions 72-82 (GSISSSNNGGS) are enriched in low complexity. The helical transmembrane segment at 135–155 (IANIFFLFLVILVIFPIFGGV) threads the bilayer. Position 156 (Asn-156) is a topological domain, extracellular. The chain crosses the membrane as a helical span at residues 157–177 (PGLNSVPLIVIITVTAIKDAI). Residues 178 to 491 (EDYRRTILDI…ARIARELNFN (314 aa)) are Cytoplasmic-facing. Residues 257-288 (TRTAPWDPSHRRSVASHTEEIQMTPVPSPVPH) are disordered. A helical membrane pass occupies residues 492-512 (VICNFGILLIMCLIAAIANGI). Over 513 to 537 (AWGKTDASLAWFEYGSIGGTPALTG) the chain is Extracellular. A helical transmembrane segment spans residues 538-558 (FITFWAAVIVFQNLVPISLYI). Residues 559-1123 (SLEIVRTLQA…TISNFFYKNM (565 aa)) are Cytoplasmic-facing. Catalysis depends on Asp-606, which acts as the 4-aspartylphosphate intermediate. The ATP site is built by Asp-606, Lys-607, Thr-608, Glu-740, Phe-781, Ser-783, Lys-786, Lys-804, Arg-839, Thr-840, Thr-919, Gly-920, Asp-921, Arg-1031, and Lys-1037. A Mg(2+)-binding site is contributed by Asp-606. Thr-608 contacts Mg(2+). Asp-1057 is a binding site for Mg(2+). Residues Asn-1060 and Asp-1061 each contribute to the ATP site. Residue Asp-1061 participates in Mg(2+) binding. The helical transmembrane segment at 1124-1144 (IWTWSIFWYQCYCNFDIAYIF) threads the bilayer. The Extracellular segment spans residues 1145–1146 (EY). A helical transmembrane segment spans residues 1147 to 1167 (TYILMFNLFFTSVPVILMGVL). Residues 1168 to 1200 (DQDVSDTVSLAVPQLYRRGIERKEWTQTKFWLY) are Cytoplasmic-facing. Residues 1201-1221 (MIDGVYQSVMSFFIPFIFVVL) form a helical membrane-spanning segment. Residues 1222 to 1237 (TPTAAGNGLDVSERTR) are Extracellular-facing. Residues 1238–1258 (LGAYIAHPAVITINGYILINT) form a helical membrane-spanning segment. Residues 1259–1262 (YRWD) are Cytoplasmic-facing. Residues 1263–1283 (WLMLLSIVLSDVFIFFWTGVY) form a helical membrane-spanning segment. Topologically, residues 1284-1302 (TATTYSAGFYQAAPQVYQE) are extracellular. A helical membrane pass occupies residues 1303–1323 (LTFWMCLIVTPALCLLPRLVV). Arg-1320 is a binding site for a 1,2-diacyl-sn-glycero-3-phospho-L-serine. Residues 1324 to 1555 (KCIQKQRFPY…EGEPPREPPM (232 aa)) lie on the Cytoplasmic side of the membrane. Disordered regions lie at residues 1364–1456 (VEGE…ERTR) and 1489–1555 (ESTH…EPPM). The segment covering 1406-1432 (ATHNTRAQNGSDGTTYIMQSRTSTELQ) has biased composition (polar residues). Composition is skewed to basic and acidic residues over residues 1436–1456 (PFDRDREEETPAVRPSIERTR) and 1540–1555 (KSIDTTEGEPPREPPM).

The protein belongs to the cation transport ATPase (P-type) (TC 3.A.3) family. Type IV subfamily. Component of a flippase complex consisting of DNF1 and CDC50. Interacts with CDC50; the interaction is direct. It depends on Mg(2+) as a cofactor.

The protein localises to the cell membrane. The protein resides in the endosome membrane. Its subcellular location is the golgi apparatus. It localises to the trans-Golgi network membrane. It catalyses the reaction ATP + H2O + phospholipidSide 1 = ADP + phosphate + phospholipidSide 2.. The enzyme catalyses a 1,2-diacyl-sn-glycero-3-phosphoethanolamine(out) + ATP + H2O = a 1,2-diacyl-sn-glycero-3-phosphoethanolamine(in) + ADP + phosphate + H(+). The catalysed reaction is a 1,2-diacyl-sn-glycero-3-phosphocholine(out) + ATP + H2O = a 1,2-diacyl-sn-glycero-3-phosphocholine(in) + ADP + phosphate + H(+). It carries out the reaction a beta-D-glucosyl-(1&lt;-&gt;1')-N-acylsphing-4-enine(out) + ATP + H2O = a beta-D-glucosyl-(1&lt;-&gt;1')-N-acylsphing-4-enine(in) + ADP + phosphate + H(+). It catalyses the reaction a 1,2-diacyl-sn-glycero-3-phospho-L-serine(out) + ATP + H2O = a 1,2-diacyl-sn-glycero-3-phospho-L-serine(in) + ADP + phosphate + H(+). In terms of biological role, catalytic component of a P4-ATPase flippase complex which catalyzes the hydrolysis of ATP coupled to the transport of phosphatidylcholine and phosphatidylserine from the lumenal to the cytosolic leaflet of membranes and ensures the maintenance of asymmetric distribution of phospholipids. May also transport glucosylceramide and phosphatidylethanolamine. The protein is Phospholipid-transporting ATPase DNF1 of Chaetomium thermophilum (strain DSM 1495 / CBS 144.50 / IMI 039719) (Thermochaetoides thermophila).